Reading from the N-terminus, the 782-residue chain is Chondroitin proteoglycan 4 (782 aa).

The N-terminal stretch at 1–18 is a signal peptide; sequence MRLVYSLIFLLFIPFSHP. N-linked (GlcNAc...) asparagine glycans are attached at residues Asn76, Asn208, Asn462, Asn468, Asn474, and Asn503. The disordered stretch occupies residues 513–726; it reads ISEKSTEESS…EDQGSGNYKK (214 aa). Low complexity-rich tracts occupy residues 520–532, 548–566, 573–612, 662–672, and 688–722; these read ESSG…SGDG, SGSS…SSGE, SSGS…SSDT, FGESSGSSGES, and SGSS…QGSG. N-linked (GlcNAc...) asparagine glycosylation occurs at Asn559. Ser691 carries an O-linked (Xyl...) (chondroitin sulfate) serine glycan. A glycan (N-linked (GlcNAc...) asparagine) is linked at Asn699. 5 O-linked (Xyl...) (chondroitin sulfate) serine glycosylation sites follow: Ser701, Ser704, Ser708, Ser714, and Ser721. An N-linked (GlcNAc...) asparagine glycan is attached at Asn743.

This Caenorhabditis elegans protein is Chondroitin proteoglycan 4.